Reading from the N-terminus, the 327-residue chain is Biotin synthase (327 aa).

One can recognise a Radical SAM core domain in the interval 49-282 (FNKDKIDLCS…NKVIRLCGGR (234 aa)). Positions 67, 71, and 74 each coordinate [4Fe-4S] cluster. Residues S110, C142, C201, and R277 each coordinate [2Fe-2S] cluster.

This sequence belongs to the radical SAM superfamily. Biotin synthase family. As to quaternary structure, homodimer. Requires [4Fe-4S] cluster as cofactor. It depends on [2Fe-2S] cluster as a cofactor.

The enzyme catalyses (4R,5S)-dethiobiotin + (sulfur carrier)-SH + 2 reduced [2Fe-2S]-[ferredoxin] + 2 S-adenosyl-L-methionine = (sulfur carrier)-H + biotin + 2 5'-deoxyadenosine + 2 L-methionine + 2 oxidized [2Fe-2S]-[ferredoxin]. It participates in cofactor biosynthesis; biotin biosynthesis; biotin from 7,8-diaminononanoate: step 2/2. Its function is as follows. Catalyzes the conversion of dethiobiotin (DTB) to biotin by the insertion of a sulfur atom into dethiobiotin via a radical-based mechanism. The chain is Biotin synthase from Methanococcus maripaludis (strain C5 / ATCC BAA-1333).